A 426-amino-acid polypeptide reads, in one-letter code: Glutamate-1-semialdehyde 2,1-aminomutase (426 aa).

Position 265 is an N6-(pyridoxal phosphate)lysine (K265).

This sequence belongs to the class-III pyridoxal-phosphate-dependent aminotransferase family. HemL subfamily. Homodimer. Pyridoxal 5'-phosphate is required as a cofactor.

It localises to the cytoplasm. The catalysed reaction is (S)-4-amino-5-oxopentanoate = 5-aminolevulinate. It participates in porphyrin-containing compound metabolism; protoporphyrin-IX biosynthesis; 5-aminolevulinate from L-glutamyl-tRNA(Glu): step 2/2. This Escherichia coli O7:K1 (strain IAI39 / ExPEC) protein is Glutamate-1-semialdehyde 2,1-aminomutase.